The chain runs to 172 residues: Translationally-controlled tumor protein (172 aa).

A TCTP domain is found at 1 to 172 (MIIYRDLISH…FKDGLEMEKC (172 aa)). The residue at position 46 (Ser-46) is a Phosphoserine; by PLK1. Ser-53 bears the Phosphoserine mark. Residue Ser-64 is modified to Phosphoserine; by PLK1. Positions 70–172 (VDIVMNHHLQ…FKDGLEMEKC (103 aa)) are required for reduction of TSC22D1 protein stability.

It belongs to the TCTP family. As to quaternary structure, homodimer. Interacts with STEAP3. Interacts with TSC22D1; interaction results in the destabilization of TSC22D1 protein.

The protein resides in the cytoplasm. Involved in calcium binding and microtubule stabilization. Acts as a negative regulator of TSC22D1-mediated apoptosis, via interaction with and destabilization of TSC22D1 protein. The chain is Translationally-controlled tumor protein (TPT1) from Bos taurus (Bovine).